Consider the following 378-residue polypeptide: Erythronate-4-phosphate dehydrogenase (378 aa).

2 residues coordinate substrate: Ser45 and Thr66. NAD(+)-binding residues include Asp146 and Thr175. Arg208 is a catalytic residue. Residue Asp232 coordinates NAD(+). Residue Glu237 is part of the active site. His254 serves as the catalytic Proton donor. NAD(+) is bound at residue Gly257. Residue Tyr258 participates in substrate binding.

This sequence belongs to the D-isomer specific 2-hydroxyacid dehydrogenase family. PdxB subfamily. In terms of assembly, homodimer.

It localises to the cytoplasm. The enzyme catalyses 4-phospho-D-erythronate + NAD(+) = (R)-3-hydroxy-2-oxo-4-phosphooxybutanoate + NADH + H(+). The protein operates within cofactor biosynthesis; pyridoxine 5'-phosphate biosynthesis; pyridoxine 5'-phosphate from D-erythrose 4-phosphate: step 2/5. Its function is as follows. Catalyzes the oxidation of erythronate-4-phosphate to 3-hydroxy-2-oxo-4-phosphonooxybutanoate. The sequence is that of Erythronate-4-phosphate dehydrogenase from Escherichia coli O17:K52:H18 (strain UMN026 / ExPEC).